The sequence spans 561 residues: DNA ligase B (561 aa).

Lysine 125 (N6-AMP-lysine intermediate) is an active-site residue.

The protein belongs to the NAD-dependent DNA ligase family. LigB subfamily.

The enzyme catalyses NAD(+) + (deoxyribonucleotide)n-3'-hydroxyl + 5'-phospho-(deoxyribonucleotide)m = (deoxyribonucleotide)n+m + AMP + beta-nicotinamide D-nucleotide.. In terms of biological role, catalyzes the formation of phosphodiester linkages between 5'-phosphoryl and 3'-hydroxyl groups in double-stranded DNA using NAD as a coenzyme and as the energy source for the reaction. In Salmonella enteritidis PT4 (strain P125109), this protein is DNA ligase B.